Here is a 763-residue protein sequence, read N- to C-terminus: Phosphoglycerol transferase I (763 aa).

4 helical membrane passes run 1–21 (MSELLSVALFLASVLIYAWKA), 26–46 (WWFAATLTVLGLFVILNITLY), 77–97 (ILPGIGIALALVAVFGALGWI), and 108–128 (VGYSLLALLLALGSVDASPAF).

This sequence belongs to the OpgB family.

The protein localises to the cell inner membrane. The catalysed reaction is a phosphatidylglycerol + a membrane-derived-oligosaccharide D-glucose = a 1,2-diacyl-sn-glycerol + a membrane-derived-oligosaccharide 6-(glycerophospho)-D-glucose.. It participates in glycan metabolism; osmoregulated periplasmic glucan (OPG) biosynthesis. Transfers a phosphoglycerol residue from phosphatidylglycerol to the membrane-bound nascent glucan backbones. This Salmonella agona (strain SL483) protein is Phosphoglycerol transferase I.